Reading from the N-terminus, the 181-residue chain is Small ribosomal subunit protein uS4 (181 aa).

One can recognise an S4 RNA-binding domain in the interval 108–177; sequence RRLQTMVYRQ…EGHPEIERIN (70 aa). The interval 161–181 is disordered; the sequence is GTSPLTSEGHPEIERINKKRR. A compositionally biased stretch (basic and acidic residues) spans 169 to 181; sequence GHPEIERINKKRR.

It belongs to the universal ribosomal protein uS4 family. As to quaternary structure, part of the 30S ribosomal subunit. Contacts protein S5. The interaction surface between S4 and S5 is involved in control of translational fidelity.

Functionally, one of the primary rRNA binding proteins, it binds directly to 16S rRNA where it nucleates assembly of the body of the 30S subunit. Its function is as follows. With S5 and S12 plays an important role in translational accuracy. The polypeptide is Small ribosomal subunit protein uS4 (Methanosphaerula palustris (strain ATCC BAA-1556 / DSM 19958 / E1-9c)).